The sequence spans 344 residues: Gas vesicle ATPase GvpN2 (344 aa).

The interval 1 to 55 is disordered; the sequence is MTDTSRNRKVRGSKIRSSRSDKRQSRGSEDKELKRLADARDTDSEQAGDRVGDAF. Residues 7-17 show a composition bias toward basic residues; it reads NRKVRGSKIRS. A compositionally biased stretch (basic and acidic residues) spans 18–52; it reads SRSDKRQSRGSEDKELKRLADARDTDSEQAGDRVG. ATP is bound at residue 89 to 96; it reads GPTGCGKT.

It belongs to the CbbQ/NirQ/NorQ/GpvN family. As to quaternary structure, forms homodimers, a GvpN-GvpO heterodimer, interacts with GvpC and GvpL, might interact with GvpA.

The protein localises to the gas vesicle. It is found in the cytoplasm. It catalyses the reaction ATP + H2O = ADP + phosphate + H(+). Functionally, an ATPase that functions in gas vesicle formation. A minor component of the gas vesicle, also found in soluble extracts. Gas vesicles are hollow, gas filled proteinaceous nanostructures found in several microbial planktonic microorganisms. They allow positioning of halobacteria at the optimal depth for growth in the poorly aerated, shallow brine pools of their habitat. Expression of 2 c-vac DNA fragments containing 2 divergently transcribed regions (gvpE-gvpF-gvpG-gvpH-gvpI-gvpJ-gvpK-gvpL-gvpM and gvpA-gvpC-gvpN-gvpO) allows H.volcanii to produce gas vesicles. In Halobacterium salinarum (strain ATCC 700922 / JCM 11081 / NRC-1) (Halobacterium halobium), this protein is Gas vesicle ATPase GvpN2.